The chain runs to 170 residues: Cathelicidin antimicrobial peptide (170 aa).

Residues 1–30 (MKTQRDGPSLGRWSLVLLLLGLVMPLAIVA) form the signal peptide. A propeptide spans 31–131 (QVLSYQEAVL…DISCDKDNRR (101 aa)) (cathelin-like domain (CLD)). Cystine bridges form between Cys86/Cys97 and Cys108/Cys125. Residues 150–162 (LKKIGQKIKDFLG) are active core.

This sequence belongs to the cathelicidin family. In terms of assembly, monomer, homodimer or homotrimer (in vitro). Oligomerizes as tetra- or hexamer in solution (in vitro). Post-translationally, proteolytically cleaved by proteinase PRTN3 into antibacterial peptide LL-37. Proteolytically cleaved by cathepsin CTSG and neutrophil elastase ELANE. Resistant to proteolytic degradation in solution, and when bound to both zwitterionic (mimicking mammalian membranes) and negatively charged membranes (mimicking bacterial membranes). In terms of processing, after secretion onto the skin surface, the CAMP gene product is processed by a serine protease-dependent mechanism into multiple novel antimicrobial peptides distinct from and shorter than cathelicidin LL-37. These peptides show enhanced antimicrobial action, acquiring the ability to kill skin pathogens such as S.aureus, E.coli and C.albicans. These peptides have lost the ability to stimulate CXCL8/IL8 release from keratinocytes. The peptides act synergistically, killing bacteria at lower concentrations when present together, and maintain activity at increased salt condition.

Its subcellular location is the secreted. It localises to the vesicle. In terms of biological role, antimicrobial protein that is an integral component of the innate immune system. Binds to bacterial lipopolysaccharides (LPS). Acts via neutrophil N-formyl peptide receptors to enhance the release of CXCL2. Postsecretory processing generates multiple cathelicidin antimicrobial peptides with various lengths which act as a topical antimicrobial defense in sweat on skin. The unprocessed precursor form, cathelicidin antimicrobial peptide, inhibits the growth of Gram-negative E.coli and E.aerogenes with efficiencies comparable to that of the mature peptide LL-37 (in vitro). Antimicrobial peptide that is an integral component of the innate immune system. Binds to bacterial lipopolysaccharides (LPS). Causes membrane permeabilization by forming transmembrane pores (in vitro). Causes lysis of E.coli. Exhibits antimicrobial activity against Gram-negative bacteria such as P.aeruginosa, S.typhimurium, E.aerogenes, E.coli and P.syringae, Gram-positive bacteria such as L.monocytogenes, S.epidermidis, S.pyogenes and S.aureus, as well as vancomycin-resistant enterococci (in vitro). Exhibits antimicrobial activity against methicillin-resistant S.aureus, P.mirabilis, and C.albicans in low-salt media, but not in media containing 100 mM NaCl (in vitro). Forms chiral supramolecular assemblies with quinolone signal (PQS) molecules of P.aeruginosa, which may lead to interference of bacterial quorum signaling and perturbance of bacterial biofilm formation. May form supramolecular fiber-like assemblies on bacterial membranes. Induces cytokine and chemokine producation as well as TNF/TNFA and CSF2/GMCSF production in normal human keratinocytes. Exhibits hemolytic activity against red blood cells. Its function is as follows. Exhibits antimicrobial activity against E.coli and B.megaterium (in vitro). In Chlorocebus aethiops (Green monkey), this protein is Cathelicidin antimicrobial peptide.